Here is a 357-residue protein sequence, read N- to C-terminus: MGSLEVEKTAIGWAARDPSGILSPYTYTLRNTGPEDVQVKVLYCGLCHSDLHQVKNDLGMSNYPMVPGHEVVGEVVEVGPEVTKFKVGDTVGVGLIVGCCKNCRPCKQDIEQYCAKKIWNCNDVYTDGKPTQGGFSNFMVVEQKFVVKIPEGMAPEQAAPLLCAGVTVYSPLNHFGFNQSGLRGGILGLGGVGHMGVKIAKAMGHHVTVISSSDKKRQEALDHLGADDYLVSSVNEKMQEAADSLDYIIDTIPVNHPLEPYLSLLKVDGKLILMGVINTPLQFVSPMVMLGRKSITGSFIGSMKETEEVLHFCKEKGVTCQIEMVKMDYINTAMERLEKNDVRYRFVVDVAGSKLDQ.

The Enoyl reductase (ER) domain maps to 20-348 (GILSPYTYTL…KNDVRYRFVV (329 aa)). A Zn(2+)-binding site is contributed by Cys47. Ser49 provides a ligand contact to NADP(+). Residues His69, Glu70, Cys100, Cys103, Cys106, Cys114, and Cys163 each coordinate Zn(2+). NADP(+)-binding positions include Thr167, 188-193 (GLGGVG), 211-216 (SSSDKK), Thr251, Gly275, and 298-300 (SFI).

The protein belongs to the zinc-containing alcohol dehydrogenase family. Homodimer. Zn(2+) serves as cofactor. In terms of tissue distribution, accumulates mainly in the placenta of red fruits, and, to a lower extent, in green fruits placenta, pericarp and seeds.

It is found in the cytoplasm. The enzyme catalyses (E)-cinnamyl alcohol + NADP(+) = (E)-cinnamaldehyde + NADPH + H(+). It carries out the reaction (E)-coniferol + NADP(+) = (E)-coniferaldehyde + NADPH + H(+). The catalysed reaction is (E)-sinapyl alcohol + NADP(+) = (E)-sinapaldehyde + NADPH + H(+). It catalyses the reaction (E)-4-coumaroyl alcohol + NADP(+) = (E)-4-coumaraldehyde + NADPH + H(+). The enzyme catalyses (E)-caffeyl alcohol + NADP(+) = (E)-caffeyl aldehyde + NADPH + H(+). It carries out the reaction vanillin + NADPH + H(+) = 4-hydroxy-3-methoxy-benzenemethanol + NADP(+). Its pathway is aromatic compound metabolism; phenylpropanoid biosynthesis. Inhibited, in a concentration-dependent manner, by N-(O-hydroxyphenyl) sulfinamoyltertiobutyl acetate (OHPAS), a specific cinnamyl alcohol dehydrogenase (CAD) inhibitor, as well as by ethylenediaminetetraacetic acid (EDTA), a metalloenzyme inhibitor. Functionally, involved in the biosynthesis of capsinoids natural products (e.g. capsiate), non-pungent alkaloids synthesized from phenylpropanoid intermediates in the placental tissue of sweet chili pepper fruit acting as repellant on herbivorous mammals. Catalyzes the reduction of vanillin to generate vanillyl alcohol, a precursor of capsiate, a non-pungent component that accumulates mainly in the placenta of mature red fruits, but also in green fruits to lower levels. Involved in lignin biosynthesis. Catalyzes the final step specific for the production of lignin monomers. Mediates the conversion of cinnamaldehyde and coniferaldehyde to cinnamyl alcohol and coniferyl alcohol, respectively. Catalyzes the NADPH-dependent reduction of 5-hydroxyconiferaldehyde, sinapaldehyde, 4-coumaraldehyde and caffeyl aldehyde to their respective alcohols. The chain is Cinnamyl alcohol dehydrogenase 1 from Capsicum annuum (Capsicum pepper).